Here is a 561-residue protein sequence, read N- to C-terminus: Inner membrane ABC transporter ATP-binding protein YddA (561 aa).

Topologically, residues 1 to 3 are cytoplasmic; sequence MIT. Residues 4-24 traverse the membrane as a helical segment; it reads IPITLRMLIAKYLCLLKPFWL. Over 25–31 the chain is Periplasmic; it reads RKNNKTS. The chain crosses the membrane as a helical span at residues 32 to 52; that stretch reads VLLIIIILAMILGVVKIQVWL. The region spanning 35–337 is the ABC transmembrane type-1 domain; it reads IIIILAMILG…FIYKYDELAE (303 aa). The Cytoplasmic portion of the chain corresponds to 53–70; the sequence is NDWNNDFFNALSQKETDK. A helical membrane pass occupies residues 71-91; the sequence is LWQLVLWFPALLGIFVLISVN. Residues 92–151 lie on the Periplasmic side of the membrane; that stretch reads KTWLIKLLTIRWREWLTDYYLNRWFADKNYYFTQIYGEHKNTDNPDQRIAEDILLLISKT. A helical membrane pass occupies residues 152–172; that stretch reads LSLSFGFIQSLSMLITFTVIL. Over 173–187 the chain is Cytoplasmic; it reads WESAGTLSFTVGGTE. A helical membrane pass occupies residues 188-208; the sequence is WNIQGYMVYTVVLIVIGGTLF. Over 209–290 the chain is Periplasmic; that stretch reads THKVGKRIRP…WQNIYSRSLS (82 aa). A helical membrane pass occupies residues 291–311; the sequence is VLPYFLLLPQFISGQINLGGL. The Cytoplasmic portion of the chain corresponds to 312-561; that stretch reads MKSRQAFMLV…DDICDISAVL (250 aa). Positions 367 to 561 constitute an ABC transporter domain; the sequence is VQVADASIRT…DDICDISAVL (195 aa). Residue 400-407 participates in ATP binding; sequence GYSGAGKT.

The protein belongs to the ABC transporter superfamily.

Its subcellular location is the cell inner membrane. The protein is Inner membrane ABC transporter ATP-binding protein YddA (yddA) of Escherichia coli (strain K12).